A 750-amino-acid polypeptide reads, in one-letter code: Photosystem I P700 chlorophyll a apoprotein A1 (750 aa).

8 helical membrane passes run 70-93, 156-179, 195-219, 291-309, 346-369, 385-411, 433-455, and 531-549; these read VFSAHFGQLSIIFLWLSGMYFHGA, LYCTAIGALVFAALMLFAGWFHYH, LNHHLAGLLGLGSLSWAGHQVHVSL, IAHHHLAIAILFLIAGHMY, WHAQLSLNLAMLGSLTIIVAHHMY, LSLFTHHMWIGGFLIVGAAAHAAIFMV, AIISHLNWVCIFLGFHSFGLYIH, and FLVHHIHAFTIHVTVLILL. Residues Cys-573 and Cys-582 each contribute to the [4Fe-4S] cluster site. 2 consecutive transmembrane segments (helical) span residues 589–610 and 664–686; these read HVFLGLFWMYNAISVVIFHFSW and LSAYGLFFLGAHFVWAFSLMFLF. Residue His-675 coordinates chlorophyll a'. Positions 683 and 691 each coordinate chlorophyll a. Trp-692 serves as a coordination point for phylloquinone. Residues 724–744 form a helical membrane-spanning segment; it reads AVGVTHYLLGGIATTWAFFLA.

The protein belongs to the PsaA/PsaB family. In terms of assembly, the PsaA/B heterodimer binds the P700 chlorophyll special pair and subsequent electron acceptors. PSI consists of a core antenna complex that captures photons, and an electron transfer chain that converts photonic excitation into a charge separation. The eukaryotic PSI reaction center is composed of at least 11 subunits. Requires P700 is a chlorophyll a/chlorophyll a' dimer, A0 is one or more chlorophyll a, A1 is one or both phylloquinones and FX is a shared 4Fe-4S iron-sulfur center. as cofactor.

The protein resides in the plastid. It localises to the chloroplast thylakoid membrane. It carries out the reaction reduced [plastocyanin] + hnu + oxidized [2Fe-2S]-[ferredoxin] = oxidized [plastocyanin] + reduced [2Fe-2S]-[ferredoxin]. In terms of biological role, psaA and PsaB bind P700, the primary electron donor of photosystem I (PSI), as well as the electron acceptors A0, A1 and FX. PSI is a plastocyanin-ferredoxin oxidoreductase, converting photonic excitation into a charge separation, which transfers an electron from the donor P700 chlorophyll pair to the spectroscopically characterized acceptors A0, A1, FX, FA and FB in turn. Oxidized P700 is reduced on the lumenal side of the thylakoid membrane by plastocyanin. This is Photosystem I P700 chlorophyll a apoprotein A1 from Arabidopsis thaliana (Mouse-ear cress).